The chain runs to 388 residues: 4-hydroxycoumarin synthase 2 (388 aa).

Cysteine 159 is an active-site residue.

It belongs to the thiolase-like superfamily. Chalcone/stilbene synthases family. In terms of assembly, homodimer.

It catalyses the reaction 2-hydroxybenzoyl-CoA + malonyl-CoA = 4-hydroxycoumarin + CO2 + 2 CoA. In terms of biological role, type III polyketide synthase involved preferentially in the biosynthesis of 4-hydroxycoumarin from salicoyl-CoA. Can also use benzoyl-CoA and malonyl-CoA to produce 3,5-dihydroxybiphenyl as a major product and benzoyldiacetic acid lactone as a minor side product. Can also use m-hydroxybenzoyl-CoA as substrate, producing m-hydroxybenzoyl diacetic acid lactone as a derailment product. No activity with p-hydroxybenzoyl-CoA, CoA-linked cinnamic acids or acetyl-CoA. This Sorbus aucuparia (European mountain ash) protein is 4-hydroxycoumarin synthase 2 (BIS3).